We begin with the raw amino-acid sequence, 151 residues long: Probable cGMP 3',5'-cyclic phosphodiesterase subunit delta (151 aa).

This sequence belongs to the PDE6D/unc-119 family. As to quaternary structure, interacts with Pde6.

The protein resides in the nucleus. Its subcellular location is the cytoplasm. In Aedes aegypti (Yellowfever mosquito), this protein is Probable cGMP 3',5'-cyclic phosphodiesterase subunit delta.